Consider the following 458-residue polypeptide: Translation initiation factor eIF2B subunit gamma (458 aa).

Phosphoserine is present on S291.

Belongs to the eIF-2B gamma/epsilon subunits family. Component of the translation initiation factor 2B (eIF2B) complex which is a heterodecamer of two sets of five different subunits: alpha, beta, gamma, delta and epsilon. Subunits alpha, beta and delta comprise a regulatory subcomplex and subunits epsilon and gamma comprise a catalytic subcomplex. Within the complex, the hexameric regulatory complex resides at the center, with the two heterodimeric catalytic subcomplexes bound on opposite sides.

The protein localises to the cytoplasm. Its subcellular location is the cytosol. Its function is as follows. Acts as a component of the translation initiation factor 2B (eIF2B) complex, which catalyzes the exchange of GDP for GTP on the eukaryotic initiation factor 2 (eIF2) complex gamma subunit. Its guanine nucleotide exchange factor activity is repressed when bound to eIF2 complex phosphorylated on the alpha subunit, thereby limiting the amount of methionyl-initiator methionine tRNA available to the ribosome and consequently global translation is repressed. The polypeptide is Translation initiation factor eIF2B subunit gamma (tif223) (Schizosaccharomyces pombe (strain 972 / ATCC 24843) (Fission yeast)).